Consider the following 219-residue polypeptide: Elongation factor Ts, chloroplastic (219 aa).

This sequence belongs to the EF-Ts family.

It localises to the plastid. It is found in the chloroplast. In terms of biological role, associates with the EF-Tu.GDP complex and induces the exchange of GDP to GTP. It remains bound to the aminoacyl-tRNA.EF-Tu.GTP complex up to the GTP hydrolysis stage on the ribosome. The sequence is that of Elongation factor Ts, chloroplastic (tsf) from Rhodomonas salina (Cryptomonas salina).